The following is a 201-amino-acid chain: Thioredoxin reductase-like selenoprotein T (201 aa).

A signal peptide spans 1-26 (MARSSGPLCLLLLGGLVAGILSGASA). The segment at residues 51–54 (CVSU) is a cross-link (cysteinyl-selenocysteine (Cys-Sec)). A non-standard amino acid (selenocysteine) is located at residue selenocysteine 54. Residues 96-116 (VFKLVLIGLIIAGKDPFAFFG) form a helical membrane-spanning segment.

Belongs to the SelWTH family. Selenoprotein T subfamily. In terms of processing, may contain a selenide-sulfide bond between Cys-51 and Sec-54. This bond is speculated to serve as redox-active pair.

It is found in the endoplasmic reticulum membrane. It catalyses the reaction [thioredoxin]-dithiol + NADP(+) = [thioredoxin]-disulfide + NADPH + H(+). Selenoprotein with thioredoxin reductase-like oxidoreductase activity. The sequence is that of Thioredoxin reductase-like selenoprotein T (selenot) from Xenopus tropicalis (Western clawed frog).